The chain runs to 292 residues: ATP synthase gamma chain (292 aa).

Belongs to the ATPase gamma chain family. As to quaternary structure, F-type ATPases have 2 components, CF(1) - the catalytic core - and CF(0) - the membrane proton channel. CF(1) has five subunits: alpha(3), beta(3), gamma(1), delta(1), epsilon(1). CF(0) has three main subunits: a, b and c.

Its subcellular location is the cell inner membrane. Its function is as follows. Produces ATP from ADP in the presence of a proton gradient across the membrane. The gamma chain is believed to be important in regulating ATPase activity and the flow of protons through the CF(0) complex. The polypeptide is ATP synthase gamma chain (Brucella ovis (strain ATCC 25840 / 63/290 / NCTC 10512)).